The chain runs to 591 residues: V-type ATP synthase alpha chain (591 aa).

Residue 231 to 238 (GPFGSGKT) participates in ATP binding.

The protein belongs to the ATPase alpha/beta chains family.

It catalyses the reaction ATP + H2O + 4 H(+)(in) = ADP + phosphate + 5 H(+)(out). In terms of biological role, produces ATP from ADP in the presence of a proton gradient across the membrane. The V-type alpha chain is a catalytic subunit. The sequence is that of V-type ATP synthase alpha chain from Clostridium novyi (strain NT).